The sequence spans 187 residues: MDRLIMGKYDVSGIQIHDMGLAKYINLNSYFNLHTGGRYSNYSAGKRNVNTIERLLNKLMRTEKWTGKKYSAYRVLKEAFEIVEQKTKQNPVQVLINAIENSAPREEVTRLKYGGIAVPKSVDVSPSRRLDEALRNICIGATSKSFKSKVPIEECLANEIILASRNDGNSYAVSKKEEIERVAASAR.

It belongs to the universal ribosomal protein uS7 family. Part of the 30S ribosomal subunit.

In terms of biological role, one of the primary rRNA binding proteins, it binds directly to 16S rRNA where it nucleates assembly of the head domain of the 30S subunit. Is located at the subunit interface close to the decoding center. This chain is Small ribosomal subunit protein uS7, found in Picrophilus torridus (strain ATCC 700027 / DSM 9790 / JCM 10055 / NBRC 100828 / KAW 2/3).